Here is a 585-residue protein sequence, read N- to C-terminus: Arginine--tRNA ligase (585 aa).

Positions 131 to 141 (ANPTGPMHVGH) match the 'HIGH' region motif.

The protein belongs to the class-I aminoacyl-tRNA synthetase family. As to quaternary structure, monomer.

Its subcellular location is the cytoplasm. It carries out the reaction tRNA(Arg) + L-arginine + ATP = L-arginyl-tRNA(Arg) + AMP + diphosphate. The chain is Arginine--tRNA ligase from Rhizobium meliloti (strain 1021) (Ensifer meliloti).